The following is a 524-amino-acid chain: PiggyBac transposable element-derived protein 5 (524 aa).

A disordered region spans residues 30–117 (DDVFGESGPD…DTGGPTRKMP (88 aa)). The span at 47–59 (STSAASRSSSAAS) shows a compositional bias: low complexity. Residues 67-79 (PGPPGAAPPPPRA) show a composition bias toward pro residues. The span at 98-108 (LRDRPPPRFED) shows a compositional bias: basic and acidic residues. Residue serine 521 is modified to Phosphoserine.

The protein localises to the nucleus. Transposase that mediates sequence-specific genomic rearrangements. Can induce genomic rearrangements that inactivate the HPRT1 gene. In Homo sapiens (Human), this protein is PiggyBac transposable element-derived protein 5 (PGBD5).